Reading from the N-terminus, the 321-residue chain is tRNA-5-methyluridine(54) 2-sulfurtransferase (321 aa).

The Zn(2+) site is built by Cys-3, Cys-6, Cys-22, and His-25. ATP contacts are provided by residues 53–55 (AVS), Asp-59, and Ile-79. Positions 130 and 133 each coordinate [4Fe-4S] cluster. Lys-137 is covalently cross-linked (Glycyl lysine isopeptide (Lys-Gly) (interchain with G-Cter in TtuB)). ATP contacts are provided by Gly-156 and Asp-161. Cys-222 serves as a coordination point for [4Fe-4S] cluster. Glycyl lysine isopeptide (Lys-Gly) (interchain with G-Cter in TtuB) cross-links involve residues Lys-226 and Lys-229. Zn(2+) contacts are provided by Cys-274, Cys-277, Cys-286, and Cys-289.

The protein belongs to the TtcA family. TtuA subfamily. Homodimer. Is able to form a heterocomplex with TtuB. [4Fe-4S] cluster serves as cofactor. The cofactor is Mg(2+). In terms of processing, conjugated to TtuB via covalent linkages involving Lys-137, Lys-226 and Lys-229.

It carries out the reaction [TtuB sulfur-carrier protein]-C-terminal-Gly-aminoethanethioate + 5-methyluridine(54) in tRNA + ATP + H2O = [TtuB sulfur-carrier protein]-C-terminal Gly-Gly + 5-methyl-2-thiouridine(54) in tRNA + AMP + diphosphate + H(+). It participates in tRNA modification. Its activity is regulated as follows. Enzymatic activity may be regulated by TtuB conjugation. Its function is as follows. Catalyzes the ATP-dependent 2-thiolation of 5-methyluridine residue at position 54 in the T loop of tRNAs, leading to 5-methyl-2-thiouridine (m(5)s(2)U or s(2)T). This modification allows thermal stabilization of tRNAs in thermophilic microorganisms, and is required for cell growth at high temperatures. TtuA transfers the S atom from the thiocarboxylated C-terminus of TtuB to tRNA. This is tRNA-5-methyluridine(54) 2-sulfurtransferase from Thermus thermophilus (strain ATCC BAA-163 / DSM 7039 / HB27).